Here is a 169-residue protein sequence, read N- to C-terminus: Photosystem I assembly protein Ycf3 (169 aa).

3 TPR repeats span residues 36 to 69, 73 to 106, and 121 to 154; these read AFTY…EIDP, SYIL…NPFL, and GEQA…TPGN.

This sequence belongs to the Ycf3 family.

The protein resides in the plastid. It localises to the chloroplast thylakoid membrane. Functionally, essential for the assembly of the photosystem I (PSI) complex. May act as a chaperone-like factor to guide the assembly of the PSI subunits. This chain is Photosystem I assembly protein Ycf3, found in Cucumis sativus (Cucumber).